An 88-amino-acid polypeptide reads, in one-letter code: Small ribosomal subunit protein bS20 (88 aa).

The tract at residues 1 to 27 is disordered; that stretch reads MANSKSAKKRALQSEKRRQHNASRRSM.

The protein belongs to the bacterial ribosomal protein bS20 family.

Binds directly to 16S ribosomal RNA. The chain is Small ribosomal subunit protein bS20 from Shewanella sp. (strain ANA-3).